A 297-amino-acid chain; its full sequence is Glycine--tRNA ligase alpha subunit (297 aa).

The protein belongs to the class-II aminoacyl-tRNA synthetase family. As to quaternary structure, tetramer of two alpha and two beta subunits.

The protein resides in the cytoplasm. It catalyses the reaction tRNA(Gly) + glycine + ATP = glycyl-tRNA(Gly) + AMP + diphosphate. This is Glycine--tRNA ligase alpha subunit (glyQ) from Halalkalibacterium halodurans (strain ATCC BAA-125 / DSM 18197 / FERM 7344 / JCM 9153 / C-125) (Bacillus halodurans).